A 150-amino-acid polypeptide reads, in one-letter code: Cytochrome c oxidase subunit 5A, mitochondrial (150 aa).

A mitochondrion-targeting transit peptide spans 1–41; it reads MLGAALRRCAVAATARAGPRGLLHSAPTPGPAAAIQSVRCY. An SIFI-degron motif is present at residues 2–17; that stretch reads LGAALRRCAVAATARA. Residues lysine 87 and lysine 113 each carry the N6-acetyllysine modification. Threonine 141 carries the phosphothreonine modification.

It belongs to the cytochrome c oxidase subunit 5A family. As to quaternary structure, component of the cytochrome c oxidase (complex IV, CIV), a multisubunit enzyme composed of 14 subunits. The complex is composed of a catalytic core of 3 subunits MT-CO1, MT-CO2 and MT-CO3, encoded in the mitochondrial DNA, and 11 supernumerary subunits COX4I, COX5A, COX5B, COX6A, COX6B, COX6C, COX7A, COX7B, COX7C, COX8 and NDUFA4, which are encoded in the nuclear genome. The complex exists as a monomer or a dimer and forms supercomplexes (SCs) in the inner mitochondrial membrane with NADH-ubiquinone oxidoreductase (complex I, CI) and ubiquinol-cytochrome c oxidoreductase (cytochrome b-c1 complex, complex III, CIII), resulting in different assemblies (supercomplex SCI(1)III(2)IV(1) and megacomplex MCI(2)III(2)IV(2)). Interacts with AFG1L. Interacts with RAB5IF. In response to mitochondrial stress, the precursor protein is ubiquitinated by the SIFI complex in the cytoplasm before mitochondrial import, leading to its degradation. Within the SIFI complex, UBR4 initiates ubiquitin chain that are further elongated or branched by KCMF1.

It is found in the mitochondrion inner membrane. It functions in the pathway energy metabolism; oxidative phosphorylation. In terms of biological role, component of the cytochrome c oxidase, the last enzyme in the mitochondrial electron transport chain which drives oxidative phosphorylation. The respiratory chain contains 3 multisubunit complexes succinate dehydrogenase (complex II, CII), ubiquinol-cytochrome c oxidoreductase (cytochrome b-c1 complex, complex III, CIII) and cytochrome c oxidase (complex IV, CIV), that cooperate to transfer electrons derived from NADH and succinate to molecular oxygen, creating an electrochemical gradient over the inner membrane that drives transmembrane transport and the ATP synthase. Cytochrome c oxidase is the component of the respiratory chain that catalyzes the reduction of oxygen to water. Electrons originating from reduced cytochrome c in the intermembrane space (IMS) are transferred via the dinuclear copper A center (CU(A)) of subunit 2 and heme A of subunit 1 to the active site in subunit 1, a binuclear center (BNC) formed by heme A3 and copper B (CU(B)). The BNC reduces molecular oxygen to 2 water molecules using 4 electrons from cytochrome c in the IMS and 4 protons from the mitochondrial matrix. This chain is Cytochrome c oxidase subunit 5A, mitochondrial (COX5A), found in Cebuella pygmaea (Pygmy marmoset).